We begin with the raw amino-acid sequence, 647 residues long: DNA mismatch repair protein MutL (647 aa).

A compositionally biased stretch (basic and acidic residues) spans 387-400 (SAKPVHEATDEKAE). A disordered region spans residues 387–412 (SAKPVHEATDEKAEPQSTSVKFAERK).

It belongs to the DNA mismatch repair MutL/HexB family.

Functionally, this protein is involved in the repair of mismatches in DNA. It is required for dam-dependent methyl-directed DNA mismatch repair. May act as a 'molecular matchmaker', a protein that promotes the formation of a stable complex between two or more DNA-binding proteins in an ATP-dependent manner without itself being part of a final effector complex. This is DNA mismatch repair protein MutL from Streptococcus sanguinis (strain SK36).